A 178-amino-acid polypeptide reads, in one-letter code: Outer envelope pore protein 16-2, chloroplastic (178 aa).

Positions 1–102 are contains beta strands; the sequence is MEKSGGRIVM…DALVKNTGKE (102 aa). Residues 103 to 119 traverse the membrane as a helical segment; it reads SLQWGLAAGLYSGITYG.

It belongs to the Tim17/Tim22/Tim23 family. Plastid outer envelope porin OEP16 (TC 1.B.30) subfamily. Homodimer and oligomers in membrane. As to expression, detected in pollen and seeds. Present in leaves and cotyledons.

It is found in the plastid. It localises to the chloroplast outer membrane. Its function is as follows. Voltage-dependent high-conductance channel with a slight cation-selectivity; selective for amino acids but excludes triosephosphates or uncharged sugars. Non-essential amino acid-selective channel protein and translocation pore for NADPH:protochlorophyllide oxidoreductase A (PORA) and possibly PORB. In Arabidopsis thaliana (Mouse-ear cress), this protein is Outer envelope pore protein 16-2, chloroplastic (OEP162).